Consider the following 102-residue polypeptide: DNA/RNA-binding protein Alba 2 (102 aa).

Positions 10, 13, 40, 42, 43, 46, and 86 each coordinate DNA.

Belongs to the histone-like Alba family. Forms homodimers and homotetramers; oligomerization is enhanced and stabilized by DNA. Interacts with Alba 1.

It is found in the cytoplasm. The protein localises to the chromosome. Functionally, binds double-stranded DNA tightly but without sequence specificity. Involved in DNA compaction. This chain is DNA/RNA-binding protein Alba 2, found in Aeropyrum pernix (strain ATCC 700893 / DSM 11879 / JCM 9820 / NBRC 100138 / K1).